A 2210-amino-acid chain; its full sequence is Mediator of RNA polymerase II transcription subunit 13-like (2210 aa).

Positions 391 to 400 (SKRSQMSTPT) are enriched in polar residues. 3 disordered regions span residues 391–414 (SKRS…TWDF), 435–489 (AVGP…PFHH), and 519–582 (VSSS…NPAL). Over residues 445-458 (SQPGFSAGPSSSSS) the composition is skewed to low complexity. Positions 468–480 (KTAERQEKGDKLQ) are enriched in basic and acidic residues. The span at 533–544 (SRNTSKQMNLNP) shows a compositional bias: polar residues. Pro residues predominate over residues 551 to 560 (PISPLPPTLS). Phosphoserine occurs at positions 553 and 560. The LXXLL motif 1 signature appears at 669-673 (LQRLL). Basic and acidic residues predominate over residues 736 to 752 (GTEKDSLKKNKSEDGFG). The interval 736-770 (GTEKDSLKKNKSEDGFGTKDVTTPGHSTPVPDGKN) is disordered. 3 positions are modified to phosphoserine: S817, S826, and S923. The segment at 1016–1096 (PQMNTPVTLN…STTRPLNSVE (81 aa)) is disordered. Positions 1025 to 1036 (NSAAPASNSGAG) are enriched in low complexity. The span at 1077 to 1092 (TDQGSPASTPSTTRPL) shows a compositional bias: polar residues. An LXXLL motif 2 motif is present at residues 1225 to 1229 (LLLLL). The segment at 1380-1401 (LPIPTLLVGYDKDFLTISPFSL) is leucine-zipper. 2 disordered regions span residues 1530 to 1656 (QTPP…VTER) and 2045 to 2080 (GNLH…QGER). Low complexity predominate over residues 1531–1608 (TPPAAAQGQA…ISTTSSSGFS (78 aa)). Residues 1615–1629 (NPSTGGISADRTQGN) are compositionally biased toward polar residues. Residues 1637-1650 (DPGQSSSQPSQDGQ) show a composition bias toward low complexity. Position 2083 is a phosphoserine (S2083).

It belongs to the Mediator complex subunit 13 family. As to quaternary structure, component of the Mediator complex, which is composed of MED1, MED4, MED6, MED7, MED8, MED9, MED10, MED11, MED12, MED13, MED13L, MED14, MED15, MED16, MED17, MED18, MED19, MED20, MED21, MED22, MED23, MED24, MED25, MED26, MED27, MED29, MED30, MED31, CCNC, CDK8 and CDC2L6/CDK11. The MED12, MED13, CCNC and CDK8 subunits form a distinct module termed the CDK8 module. Mediator containing the CDK8 module is less active than Mediator lacking this module in supporting transcriptional activation. Individual preparations of the Mediator complex lacking one or more distinct subunits have been variously termed ARC, CRSP, DRIP, PC2, SMCC and TRAP. In terms of tissue distribution, highly expressed in brain (cerebellum), heart (aorta), skeletal muscle, kidney, placenta and peripheral blood leukocytes. Highly expressed in fetal brain.

Its subcellular location is the nucleus. In terms of biological role, component of the Mediator complex, a coactivator involved in the regulated transcription of nearly all RNA polymerase II-dependent genes. Mediator functions as a bridge to convey information from gene-specific regulatory proteins to the basal RNA polymerase II transcription machinery. Mediator is recruited to promoters by direct interactions with regulatory proteins and serves as a scaffold for the assembly of a functional preinitiation complex with RNA polymerase II and the general transcription factors. This subunit may specifically regulate transcription of targets of the Wnt signaling pathway and SHH signaling pathway. The chain is Mediator of RNA polymerase II transcription subunit 13-like (MED13L) from Homo sapiens (Human).